The following is a 258-amino-acid chain: Pimeloyl-[acyl-carrier protein] methyl ester esterase (258 aa).

The 227-residue stretch at leucine 16 to proline 242 folds into the AB hydrolase-1 domain. Substrate-binding positions include tryptophan 22, serine 82–methionine 83, and phenylalanine 143–glutamine 147. Serine 82 (nucleophile) is an active-site residue. Residues aspartate 207 and histidine 235 contribute to the active site. A substrate-binding site is contributed by histidine 235.

Belongs to the AB hydrolase superfamily. Carboxylesterase BioH family. Monomer.

It is found in the cytoplasm. The catalysed reaction is 6-carboxyhexanoyl-[ACP] methyl ester + H2O = 6-carboxyhexanoyl-[ACP] + methanol + H(+). Its pathway is cofactor biosynthesis; biotin biosynthesis. The physiological role of BioH is to remove the methyl group introduced by BioC when the pimeloyl moiety is complete. It allows to synthesize pimeloyl-ACP via the fatty acid synthetic pathway through the hydrolysis of the ester bonds of pimeloyl-ACP esters. The protein is Pimeloyl-[acyl-carrier protein] methyl ester esterase of Yersinia pseudotuberculosis serotype O:1b (strain IP 31758).